The sequence spans 428 residues: Dihydroorotase (428 aa).

Zn(2+) is bound by residues H60 and H62. Substrate contacts are provided by residues H62–R64 and N94. Zn(2+)-binding residues include D152, H179, and H232. Residue N278 participates in substrate binding. D305 lines the Zn(2+) pocket. Residue D305 is part of the active site. Residue H309 coordinates substrate.

This sequence belongs to the metallo-dependent hydrolases superfamily. DHOase family. Class I DHOase subfamily. Zn(2+) is required as a cofactor.

The enzyme catalyses (S)-dihydroorotate + H2O = N-carbamoyl-L-aspartate + H(+). Its pathway is pyrimidine metabolism; UMP biosynthesis via de novo pathway; (S)-dihydroorotate from bicarbonate: step 3/3. In terms of biological role, catalyzes the reversible cyclization of carbamoyl aspartate to dihydroorotate. This Ruminiclostridium cellulolyticum (strain ATCC 35319 / DSM 5812 / JCM 6584 / H10) (Clostridium cellulolyticum) protein is Dihydroorotase.